Reading from the N-terminus, the 594-residue chain is Glomulin (594 aa).

The residue at position 2 (Ala-2) is an N-acetylalanine. The interval 2–553 (AVEELQSIIK…EEIPNMPPEM (552 aa)) is alpha-helical region with structural similarity to HEAT repeats. The segment at 300 to 594 (IDQLPMVLSP…STSEENIGIK (295 aa)) is important for interaction with RBX1.

In terms of assembly, interacts with FKBP4 and FKBP1A. Isoform 1: Interacts with RBX1 (via RING domain). Identified in complexes that contain RBX1 plus one of the cullins CUL1, CUL2, CUL3, and CUL4A. Identified in a SCF complex composed of CUL1, RBX1, SKP1, FBXW7 and GLMN. Component of a SCF-like complex consisting of CUL7, RBX1, SKP1, FBXW8 and GLMN. Interacts with unphosphorylated MET and is released upon MET phosphorylation. Post-translationally, phosphorylated on tyrosine residues. As to expression, ubiquitous.

Regulatory component of cullin-RING-based SCF (SKP1-Cullin-F-box protein) E3 ubiquitin-protein ligase complexes. Inhibits E3 ubiquitin ligase activity by binding to RBX1 (via RING domain) and inhibiting its interaction with the E2 ubiquitin-conjugating enzyme CDC34. Inhibits RBX1-mediated neddylation of CUL1. Required for normal stability and normal cellular levels of key components of SCF ubiquitin ligase complexes, including FBXW7, RBX1, CUL1, CUL2, CUL3, CUL4A, and thereby contributes to the regulation of CCNE1 and MYC levels. Essential for normal development of the vasculature. Contributes to the regulation of RPS6KB1 phosphorylation. This chain is Glomulin (GLMN), found in Homo sapiens (Human).